The primary structure comprises 414 residues: 5-aminolevulinate synthase (414 aa).

Positions 22, 133, and 152 each coordinate substrate. Positions 185, 213, and 241 each coordinate pyridoxal 5'-phosphate. K244 is an active-site residue. K244 carries the post-translational modification N6-(pyridoxal phosphate)lysine. Residues T273 and T274 each coordinate pyridoxal 5'-phosphate. Residue T359 coordinates substrate.

Belongs to the class-II pyridoxal-phosphate-dependent aminotransferase family. As to quaternary structure, homodimer. Pyridoxal 5'-phosphate is required as a cofactor.

The enzyme catalyses succinyl-CoA + glycine + H(+) = 5-aminolevulinate + CO2 + CoA. Its pathway is porphyrin-containing compound metabolism; protoporphyrin-IX biosynthesis; 5-aminolevulinate from glycine: step 1/1. In Rickettsia conorii (strain ATCC VR-613 / Malish 7), this protein is 5-aminolevulinate synthase (hemA).